The chain runs to 267 residues: Putative ankyrin repeat protein RF_1099 (267 aa).

4 ANK repeats span residues 46–75, 78–107, 136–165, and 170–199; these read DPITPIADAIKADNLEEVKKILDEGYGVNQ, LGWVPLDYAISNNNIKIADFLLKRDASMSL, DGITGMMLAAERNNPDLIKLLLKLGVNPNV, and TGMTSLMYAASYLNVEVVRVLLEQGVDPNI. The stretch at 238 to 265 forms a coiled coil; it reads KQKIIKERNSIKTRNKEKEKEIKKLFNS.

The chain is Putative ankyrin repeat protein RF_1099 from Rickettsia felis (strain ATCC VR-1525 / URRWXCal2) (Rickettsia azadi).